The following is a 636-amino-acid chain: Serine/threonine-protein kinase hal4 (636 aa).

The segment covering 1–11 has biased composition (basic and acidic residues); that stretch reads MGEKDKLHEIS. Disordered stretches follow at residues 1-167 and 181-261; these read MGEK…AGVV and AASP…PSSA. The span at 33–45 shows a compositional bias: pro residues; sequence EPPPPSSQQPPST. Composition is skewed to polar residues over residues 56–92 and 113–124; these read ALKQ…QQPL and NPSRHVSSTSNK. The span at 140 to 155 shows a compositional bias: low complexity; sequence PSGSVPPSASVSRANS. Positions 182–226 are enriched in polar residues; the sequence is ASPNPSTPSNGPAPVSTTATPSRNPVTRLQRIFSQNSVSRQNSRT. Residue serine 218 is modified to Phosphoserine. Residues 234–261 are compositionally biased toward low complexity; sequence NTEETNSTGGSETGGAANSSSTSNPSSA. Threonine 238 and threonine 241 each carry phosphothreonine. Serine 299 is modified (phosphoserine). A Protein kinase domain is found at 351-623; sequence GRCQEVIGRG…AKQIMKSEWV (273 aa). ATP-binding positions include 357–365 and lysine 385; that span reads IGRGAFGVV. Aspartate 481 acts as the Proton acceptor in catalysis.

Belongs to the protein kinase superfamily. Ser/Thr protein kinase family. Interacts with sty1.

It localises to the cytoplasm. The enzyme catalyses L-seryl-[protein] + ATP = O-phospho-L-seryl-[protein] + ADP + H(+). It catalyses the reaction L-threonyl-[protein] + ATP = O-phospho-L-threonyl-[protein] + ADP + H(+). Functionally, promotes K(+) uptake, by the potassium transporter trk1-trk2, which leads to the subsequent cellular resistance to toxic cations such as Na(+), Li(+) and Ca(2+). The sequence is that of Serine/threonine-protein kinase hal4 (hal4) from Schizosaccharomyces pombe (strain 972 / ATCC 24843) (Fission yeast).